Here is a 65-residue protein sequence, read N- to C-terminus: APLEPVYPGDDATPEQMAQYAAELRRYINMLTRPRYGKRDEEDLLDLKCSSLHAAAPRELSPMGA.

Position 36 is a tyrosine amide (Tyr-36). A propeptide spanning residues 59-65 (ELSPMGA) is cleaved from the precursor.

It belongs to the NPY family.

It localises to the secreted. Functionally, hormone secreted by pancreatic cells that acts as a regulator of pancreatic and gastrointestinal functions probably by signaling through the G protein-coupled receptor NPY4R2. This chain is Pancreatic polypeptide prohormone (PPY), found in Sus scrofa (Pig).